Reading from the N-terminus, the 486-residue chain is Probable glycine dehydrogenase (decarboxylating) subunit 2 (486 aa).

K269 is modified (N6-(pyridoxal phosphate)lysine).

Belongs to the GcvP family. C-terminal subunit subfamily. As to quaternary structure, the glycine cleavage system is composed of four proteins: P, T, L and H. In this organism, the P 'protein' is a heterodimer of two subunits. Pyridoxal 5'-phosphate is required as a cofactor.

The enzyme catalyses N(6)-[(R)-lipoyl]-L-lysyl-[glycine-cleavage complex H protein] + glycine + H(+) = N(6)-[(R)-S(8)-aminomethyldihydrolipoyl]-L-lysyl-[glycine-cleavage complex H protein] + CO2. Functionally, the glycine cleavage system catalyzes the degradation of glycine. The P protein binds the alpha-amino group of glycine through its pyridoxal phosphate cofactor; CO(2) is released and the remaining methylamine moiety is then transferred to the lipoamide cofactor of the H protein. The polypeptide is Probable glycine dehydrogenase (decarboxylating) subunit 2 (Chlorobium phaeobacteroides (strain DSM 266 / SMG 266 / 2430)).